The following is a 141-amino-acid chain: Large ribosomal subunit protein uL11 (141 aa).

Belongs to the universal ribosomal protein uL11 family. In terms of assembly, part of the ribosomal stalk of the 50S ribosomal subunit. Interacts with L10 and the large rRNA to form the base of the stalk. L10 forms an elongated spine to which L12 dimers bind in a sequential fashion forming a multimeric L10(L12)X complex. In terms of processing, one or more lysine residues are methylated.

Its function is as follows. Forms part of the ribosomal stalk which helps the ribosome interact with GTP-bound translation factors. The chain is Large ribosomal subunit protein uL11 from Shouchella clausii (strain KSM-K16) (Alkalihalobacillus clausii).